Reading from the N-terminus, the 54-residue chain is Ferredoxin (54 aa).

4Fe-4S ferredoxin-type domains follow at residues 2-28 and 29-54; these read HVIS…EGET and KYVV…ISAE. Positions 8, 11, 14, 18, 36, 39, 42, and 46 each coordinate [4Fe-4S] cluster.

It depends on [4Fe-4S] cluster as a cofactor.

Functionally, ferredoxins are iron-sulfur proteins that transfer electrons in a wide variety of metabolic reactions. In Megasphaera elsdenii, this protein is Ferredoxin.